The primary structure comprises 521 residues: Protein NRT1/ PTR FAMILY 5.5 (521 aa).

12 helical membrane-spanning segments follow: residues 3–23, 35–55, 62–82, 96–116, 134–154, 165–185, 279–299, 310–327, 356–376, 394–414, 440–460, and 478–498; these read VLSWAFTVAWFTLWMLMLYLT, AIVNVFAGVSAIGHLGMQFLV, FWMLCLSTLAFSFGFGFLAIS, FYVALTVISVGIFGRSISLGV, LVSFVIGNVGNFVFLLLAAIA, FTIPSGCEVLAMLIFISGACS, VPLFATSLISGIVFSLGNTFF, FGSWNLPLPLLLLFSEAA, PYGIPVSIILSIFCCSIAAHV, VPMSVFWLLPQYILLGSITGI, VGVCGVGIMSNIALVSLVGSV, and YYWVITVFCMFNLLLYFIVTY.

It belongs to the major facilitator superfamily. Proton-dependent oligopeptide transporter (POT/PTR) (TC 2.A.17) family. In terms of tissue distribution, expressed in roots.

It localises to the membrane. This is Protein NRT1/ PTR FAMILY 5.5 (NPF5.5) from Arabidopsis thaliana (Mouse-ear cress).